The primary structure comprises 286 residues: Translocon-associated protein subunit alpha (286 aa).

The signal sequence occupies residues 1–20 (MSSLRRLLLLLLLVFPATLL). Residues 21 to 207 (LRVGPGGSLA…EREDGLDGET (187 aa)) are Lumenal-facing. Acidic residues predominate over residues 37–75 (EDEETVEDSIIEDEDDEAEVEEDEPTDLAEDKEEDDVSG). A disordered region spans residues 37–83 (EDEETVEDSIIEDEDDEAEVEEDEPTDLAEDKEEDDVSGEPEASPSA). 2 N-linked (GlcNAc...) asparagine glycosylation sites follow: Asn-136 and Asn-191. Residues 208–228 (IFMYMFLAGLGLLVVVGLHQL) form a helical membrane-spanning segment. At 229 to 286 (LESRKRKRPIQKVEMGTSSQNDVDMSWIPQETLNQINKASPRRLPRKRAQKRSVGSDE) the chain is on the cytoplasmic side. At Ser-247 the chain carries Phosphoserine. Thr-260 carries the phosphothreonine modification. The tract at residues 261–286 (LNQINKASPRRLPRKRAQKRSVGSDE) is disordered. Ser-268 bears the Phosphoserine mark. The segment covering 268–279 (SPRRLPRKRAQK) has biased composition (basic residues).

It belongs to the TRAP-alpha family. As to quaternary structure, heterotetramer of TRAP-alpha, TRAP-beta, TRAP-delta and TRAP-gamma. Interacts with palmitoylated calnexin (CALX), the interaction is required for efficient folding of glycosylated proteins. Post-translationally, phosphorylated in its cytoplasmic tail.

The protein localises to the endoplasmic reticulum membrane. Functionally, TRAP proteins are part of a complex whose function is to bind calcium to the ER membrane and thereby regulate the retention of ER resident proteins. May be involved in the recycling of the translocation apparatus after completion of the translocation process or may function as a membrane-bound chaperone facilitating folding of translocated proteins. This chain is Translocon-associated protein subunit alpha (SSR1), found in Bos taurus (Bovine).